Reading from the N-terminus, the 65-residue chain is Small ribosomal subunit protein bS21 (65 aa).

This sequence belongs to the bacterial ribosomal protein bS21 family.

The polypeptide is Small ribosomal subunit protein bS21 (Chlorobium chlorochromatii (strain CaD3)).